We begin with the raw amino-acid sequence, 160 residues long: Endoribonuclease YbeY (160 aa).

Residues histidine 127, histidine 131, and histidine 137 each coordinate Zn(2+).

It belongs to the endoribonuclease YbeY family. Requires Zn(2+) as cofactor.

The protein resides in the cytoplasm. In terms of biological role, single strand-specific metallo-endoribonuclease involved in late-stage 70S ribosome quality control and in maturation of the 3' terminus of the 16S rRNA. This chain is Endoribonuclease YbeY, found in Synechococcus sp. (strain RCC307).